The following is a 388-amino-acid chain: T-cell surface glycoprotein CD1e, membrane-associated (388 aa).

Positions 1–19 (MLLLFLLFEGLCCPGENTA) are cleaved as a signal peptide. A propeptide spans 20-31 (APQALQSYHLAA) (removed in sCD1e). N-linked (GlcNAc...) asparagine glycosylation is found at N47 and N84. Positions 191–301 (PRFLAGLMEA…LGGHDLIIHW (111 aa)) constitute an Ig-like domain. C230 and C285 are oxidised to a cystine. A helical transmembrane segment spans residues 305 to 325 (SIFLILICLTVIVTLVILVVV).

As to quaternary structure, heterodimer with B2M (beta-2-microglobulin). The association with B2M appears to be facilitated by the presence of the propeptide. Post-translationally, mono-ubiquitinated. Proteolytically cleaved in late endosomes to yield a soluble form. As to expression, expressed on cortical thymocytes, dendritic cells, Langerhans cells, on certain T-cell leukemias, and in various other tissues.

The protein resides in the golgi apparatus membrane. Its subcellular location is the early endosome. It is found in the late endosome. It localises to the lysosome lumen. Functionally, T-cell surface glycoprotein CD1e, soluble binds diacetylated lipids, including phosphatidyl inositides and diacylated sulfoglycolipids, and is required for the presentation of glycolipid antigens on the cell surface. The membrane-associated form is not active. This chain is T-cell surface glycoprotein CD1e, membrane-associated (CD1E), found in Homo sapiens (Human).